A 151-amino-acid chain; its full sequence is MEKVESFKLDHTKVKAPFVRKCSVLDGVKGDKVTKFDLRFLQPNVESFGTAAMHGLEHLLATYLRDTLDGVIDLSPMGCRTGFYLILWGDVDAKTVKIGLEEALKKVLESDKMPAATAIECGNYRDLSLFGAKEYAKDVLDKGFSLNIYGE.

Positions 54, 58, and 121 each coordinate Fe cation.

It belongs to the LuxS family. As to quaternary structure, homodimer. Requires Fe cation as cofactor.

It catalyses the reaction S-(5-deoxy-D-ribos-5-yl)-L-homocysteine = (S)-4,5-dihydroxypentane-2,3-dione + L-homocysteine. In terms of biological role, involved in the synthesis of autoinducer 2 (AI-2) which is secreted by bacteria and is used to communicate both the cell density and the metabolic potential of the environment. The regulation of gene expression in response to changes in cell density is called quorum sensing. Catalyzes the transformation of S-ribosylhomocysteine (RHC) to homocysteine (HC) and 4,5-dihydroxy-2,3-pentadione (DPD). The protein is S-ribosylhomocysteine lyase of Clostridioides difficile (strain 630) (Peptoclostridium difficile).